A 291-amino-acid chain; its full sequence is MAAITAALIKQVREETGAGMMDVKKALTEAEGDVARAKEIIRAKGIQAAGKREGRKAQEGTIASTVVESANGQTGYAVELNSETDFVAKTPKFVEFAGSVLDDAVKAEASSVDEVLAAASGDTTVKEAVEEAAALFGEHVKVGQFAKVEGPHVEVYAHKKSAEMPPSIVAMIATDEAGAAVAHEAALQISAMGAQWLTREDVPADVLESERRVATEKTTEELKSKGKPEAVIEKIAPKIVEGRLGAFYKETVLLEQAYVKDPSKTVGDLFKEVGGTALSFARVEVGKGDAE.

The involved in Mg(2+) ion dislocation from EF-Tu stretch occupies residues 84 to 87; that stretch reads TDFV.

It belongs to the EF-Ts family.

It localises to the cytoplasm. In terms of biological role, associates with the EF-Tu.GDP complex and induces the exchange of GDP to GTP. It remains bound to the aminoacyl-tRNA.EF-Tu.GTP complex up to the GTP hydrolysis stage on the ribosome. The sequence is that of Elongation factor Ts from Bifidobacterium adolescentis (strain ATCC 15703 / DSM 20083 / NCTC 11814 / E194a).